The sequence spans 564 residues: NAD-dependent malic enzyme (564 aa).

Tyr102 functions as the Proton donor in the catalytic mechanism. Arg155 contacts NAD(+). The Proton acceptor role is filled by Lys173. A divalent metal cation is bound by residues Glu244, Asp245, and Asp268. Residues Asp268 and Asn417 each contribute to the NAD(+) site.

Belongs to the malic enzymes family. In terms of assembly, homotetramer. Requires Mg(2+) as cofactor. It depends on Mn(2+) as a cofactor.

It carries out the reaction (S)-malate + NAD(+) = pyruvate + CO2 + NADH. The catalysed reaction is oxaloacetate + H(+) = pyruvate + CO2. The protein is NAD-dependent malic enzyme of Pseudomonas aeruginosa (strain ATCC 15692 / DSM 22644 / CIP 104116 / JCM 14847 / LMG 12228 / 1C / PRS 101 / PAO1).